The chain runs to 307 residues: N-acetylmuramic acid 6-phosphate etherase (307 aa).

The region spanning 57–220 is the SIS domain; the sequence is IIEAFKTNGR…TTASMIGVGK (164 aa). The Proton donor role is filled by Glu85. The active site involves Glu116.

This sequence belongs to the GCKR-like family. MurNAc-6-P etherase subfamily. In terms of assembly, homodimer.

The enzyme catalyses N-acetyl-D-muramate 6-phosphate + H2O = N-acetyl-D-glucosamine 6-phosphate + (R)-lactate. It functions in the pathway amino-sugar metabolism; N-acetylmuramate degradation. Its function is as follows. Specifically catalyzes the cleavage of the D-lactyl ether substituent of MurNAc 6-phosphate, producing GlcNAc 6-phosphate and D-lactate. In Alkaliphilus metalliredigens (strain QYMF), this protein is N-acetylmuramic acid 6-phosphate etherase.